The sequence spans 243 residues: 1-(5-phosphoribosyl)-5-[(5-phosphoribosylamino)methylideneamino] imidazole-4-carboxamide isomerase (243 aa).

Asp8 (proton acceptor) is an active-site residue. Asp129 functions as the Proton donor in the catalytic mechanism.

This sequence belongs to the HisA/HisF family.

It is found in the cytoplasm. The catalysed reaction is 1-(5-phospho-beta-D-ribosyl)-5-[(5-phospho-beta-D-ribosylamino)methylideneamino]imidazole-4-carboxamide = 5-[(5-phospho-1-deoxy-D-ribulos-1-ylimino)methylamino]-1-(5-phospho-beta-D-ribosyl)imidazole-4-carboxamide. The protein operates within amino-acid biosynthesis; L-histidine biosynthesis; L-histidine from 5-phospho-alpha-D-ribose 1-diphosphate: step 4/9. The sequence is that of 1-(5-phosphoribosyl)-5-[(5-phosphoribosylamino)methylideneamino] imidazole-4-carboxamide isomerase from Parvibaculum lavamentivorans (strain DS-1 / DSM 13023 / NCIMB 13966).